A 464-amino-acid chain; its full sequence is Cytoplasmic tRNA 2-thiolation protein 2 (464 aa).

It belongs to the CTU2/NCS2 family.

It is found in the cytoplasm. Its pathway is tRNA modification; 5-methoxycarbonylmethyl-2-thiouridine-tRNA biosynthesis. Plays a central role in 2-thiolation of mcm(5)S(2)U at tRNA wobble positions of tRNA(Lys), tRNA(Glu) and tRNA(Gln). May act by forming a heterodimer with NCS6/CTU1 that ligates sulfur from thiocarboxylated URM1 onto the uridine of tRNAs at wobble position. The polypeptide is Cytoplasmic tRNA 2-thiolation protein 2 (Oryza sativa subsp. indica (Rice)).